The primary structure comprises 437 residues: UDP-N-acetylmuramate--L-alanine ligase (437 aa).

114–120 (GTHGKTS) is a binding site for ATP.

It belongs to the MurCDEF family.

The protein resides in the cytoplasm. It carries out the reaction UDP-N-acetyl-alpha-D-muramate + L-alanine + ATP = UDP-N-acetyl-alpha-D-muramoyl-L-alanine + ADP + phosphate + H(+). It participates in cell wall biogenesis; peptidoglycan biosynthesis. Functionally, cell wall formation. The protein is UDP-N-acetylmuramate--L-alanine ligase of Lactobacillus gasseri (strain ATCC 33323 / DSM 20243 / BCRC 14619 / CIP 102991 / JCM 1131 / KCTC 3163 / NCIMB 11718 / NCTC 13722 / AM63).